Reading from the N-terminus, the 60-residue chain is Transcriptional regulator Brz (60 aa).

Residues Cys-8–His-52 form a C4-type; atypical zinc finger.

Belongs to the Brz family.

In terms of biological role, activates transcription of bacteriorhodopsin (bop) and phytoene synthase (crtB1). May interact with DNA or RNA via the zinc finger motif. The sequence is that of Transcriptional regulator Brz (brz) from Halobacterium salinarum (strain ATCC 29341 / DSM 671 / R1).